The following is a 199-amino-acid chain: Fe/S biogenesis protein NfuA (199 aa).

[4Fe-4S] cluster-binding residues include Cys-151 and Cys-154.

This sequence belongs to the NfuA family. In terms of assembly, homodimer. Requires [4Fe-4S] cluster as cofactor.

Functionally, involved in iron-sulfur cluster biogenesis. Binds a 4Fe-4S cluster, can transfer this cluster to apoproteins, and thereby intervenes in the maturation of Fe/S proteins. Could also act as a scaffold/chaperone for damaged Fe/S proteins. This chain is Fe/S biogenesis protein NfuA, found in Xanthomonas campestris pv. campestris (strain 8004).